Reading from the N-terminus, the 237-residue chain is Ribosomal RNA small subunit methyltransferase G (237 aa).

S-adenosyl-L-methionine is bound by residues Gly-78, Phe-83, 129–130, and Arg-148; that span reads AE. The disordered stretch occupies residues 216–237; sequence SKKKETPNKYPRKAGTPNKKPL.

The protein belongs to the methyltransferase superfamily. RNA methyltransferase RsmG family.

It localises to the cytoplasm. Functionally, specifically methylates the N7 position of a guanine in 16S rRNA. The chain is Ribosomal RNA small subunit methyltransferase G from Streptococcus agalactiae serotype V (strain ATCC BAA-611 / 2603 V/R).